The primary structure comprises 89 residues: ATP synthase subunit c (89 aa).

2 helical membrane passes run 3–23 (IILGFVALACGLIVGLGAIGA) and 53–73 (FILAGLIDAAFLIGVAIALMF).

Belongs to the ATPase C chain family. F-type ATPases have 2 components, F(1) - the catalytic core - and F(0) - the membrane proton channel. F(1) has five subunits: alpha(3), beta(3), gamma(1), delta(1), epsilon(1). F(0) has three main subunits: a(1), b(2) and c(10-14). The alpha and beta chains form an alternating ring which encloses part of the gamma chain. F(1) is attached to F(0) by a central stalk formed by the gamma and epsilon chains, while a peripheral stalk is formed by the delta and b chains.

The protein resides in the cell inner membrane. Functionally, f(1)F(0) ATP synthase produces ATP from ADP in the presence of a proton or sodium gradient. F-type ATPases consist of two structural domains, F(1) containing the extramembraneous catalytic core and F(0) containing the membrane proton channel, linked together by a central stalk and a peripheral stalk. During catalysis, ATP synthesis in the catalytic domain of F(1) is coupled via a rotary mechanism of the central stalk subunits to proton translocation. Its function is as follows. Key component of the F(0) channel; it plays a direct role in translocation across the membrane. A homomeric c-ring of between 10-14 subunits forms the central stalk rotor element with the F(1) delta and epsilon subunits. The protein is ATP synthase subunit c of Verminephrobacter eiseniae (strain EF01-2).